An 86-amino-acid chain; its full sequence is Protein IDA-LIKE 1 (86 aa).

Residues 1 to 27 (MNLSHKTMFMTLYIVFLLIFGSYNATA) form the signal peptide.

Expressed in roots.

The protein localises to the secreted. Its subcellular location is the extracellular space. Involved in an ethylene-independent separation step of floral abscission. May act with RLK5 and HSL2 as ligand-receptor pairs. The chain is Protein IDA-LIKE 1 (IDL1) from Arabidopsis thaliana (Mouse-ear cress).